The sequence spans 335 residues: D-alanine--D-alanine ligase (335 aa).

The ATP-grasp domain maps to 124-329; sequence KMWFSALGVP…FTHYLYSNIK (206 aa). Position 154 to 209 (154 to 209) interacts with ATP; sequence ALENWGSIFIKAASQGSSVGCYRVDSQDELVSSLEQAFSFSPYVIVEKTINARELE. Mg(2+)-binding residues include aspartate 283, glutamate 296, and asparagine 298.

It belongs to the D-alanine--D-alanine ligase family. The cofactor is Mg(2+). Requires Mn(2+) as cofactor.

The protein resides in the cytoplasm. It catalyses the reaction 2 D-alanine + ATP = D-alanyl-D-alanine + ADP + phosphate + H(+). It functions in the pathway cell wall biogenesis; peptidoglycan biosynthesis. Its function is as follows. Cell wall formation. This is D-alanine--D-alanine ligase from Shewanella woodyi (strain ATCC 51908 / MS32).